The chain runs to 337 residues: Anthranilate phosphoribosyltransferase (337 aa).

Residues glycine 82, 85–86 (GD), threonine 90, 92–95 (NIST), 110–118 (KHGGRSVSS), and serine 122 each bind 5-phospho-alpha-D-ribose 1-diphosphate. Glycine 82 is an anthranilate binding site. Serine 94 contacts Mg(2+). Residue arginine 168 participates in anthranilate binding. Mg(2+) is bound by residues aspartate 226 and glutamate 227.

The protein belongs to the anthranilate phosphoribosyltransferase family. In terms of assembly, homodimer. The cofactor is Mg(2+).

It catalyses the reaction N-(5-phospho-beta-D-ribosyl)anthranilate + diphosphate = 5-phospho-alpha-D-ribose 1-diphosphate + anthranilate. It functions in the pathway amino-acid biosynthesis; L-tryptophan biosynthesis; L-tryptophan from chorismate: step 2/5. In terms of biological role, catalyzes the transfer of the phosphoribosyl group of 5-phosphorylribose-1-pyrophosphate (PRPP) to anthranilate to yield N-(5'-phosphoribosyl)-anthranilate (PRA). The sequence is that of Anthranilate phosphoribosyltransferase from Francisella tularensis subsp. mediasiatica (strain FSC147).